The primary structure comprises 313 residues: Arabinooligosaccharides transport system permease protein AraP (313 aa).

A run of 6 helical transmembrane segments spans residues 39–59 (FVLSFLVFFLYPIISVFIMSF), 91–111 (LEYTFWTLIVLIPVPLLLAIF), 126–146 (ALFIPALTSTIVAGIIFRLIF), 176–196 (MFLMVLLASWRWMGINILYFL), 224–244 (ITLPFLKPVTVYVLTISIIGG), and 281–301 (MGYGAAIGIVLLIVILVVSLI). One can recognise an ABC transmembrane type-1 domain in the interval 87 to 302 (LWNTLEYTFW…IVILVVSLIS (216 aa)).

Belongs to the binding-protein-dependent transport system permease family. MalFG subfamily. In terms of assembly, the complex is composed of two ATP-binding proteins (MsmX), two transmembrane proteins (AraP and AraQ) and a solute-binding protein (AraN).

The protein resides in the cell membrane. In terms of biological role, part of the ABC transporter complex AraNPQ involved in the uptake of arabinooligosaccharides. Transports alpha-1,5-arabinooligosaccharides, at least up to four L-arabinosyl units. Responsible for the translocation of the substrate across the membrane. This chain is Arabinooligosaccharides transport system permease protein AraP, found in Bacillus subtilis (strain 168).